The following is a 347-amino-acid chain: Ketol-acid reductoisomerase (NADP(+)) (347 aa).

One can recognise a KARI N-terminal Rossmann domain in the interval 3 to 182 (TKMFYDKDID…GSGCAGILET (180 aa)). Residues 26–29 (YGAQ), arginine 49, serine 53, and 83–86 (DELQ) contribute to the NADP(+) site. Residue histidine 108 is part of the active site. Glycine 134 is an NADP(+) binding site. The KARI C-terminal knotted domain maps to 183 to 328 (TFEEETTEDL…KKVRAMMPWI (146 aa)). Aspartate 191, glutamate 195, glutamate 227, and glutamate 231 together coordinate Mg(2+). Serine 252 is a binding site for substrate.

The protein belongs to the ketol-acid reductoisomerase family. Mg(2+) serves as cofactor.

It catalyses the reaction (2R)-2,3-dihydroxy-3-methylbutanoate + NADP(+) = (2S)-2-acetolactate + NADPH + H(+). It carries out the reaction (2R,3R)-2,3-dihydroxy-3-methylpentanoate + NADP(+) = (S)-2-ethyl-2-hydroxy-3-oxobutanoate + NADPH + H(+). It functions in the pathway amino-acid biosynthesis; L-isoleucine biosynthesis; L-isoleucine from 2-oxobutanoate: step 2/4. It participates in amino-acid biosynthesis; L-valine biosynthesis; L-valine from pyruvate: step 2/4. In terms of biological role, involved in the biosynthesis of branched-chain amino acids (BCAA). Catalyzes an alkyl-migration followed by a ketol-acid reduction of (S)-2-acetolactate (S2AL) to yield (R)-2,3-dihydroxy-isovalerate. In the isomerase reaction, S2AL is rearranged via a Mg-dependent methyl migration to produce 3-hydroxy-3-methyl-2-ketobutyrate (HMKB). In the reductase reaction, this 2-ketoacid undergoes a metal-dependent reduction by NADPH to yield (R)-2,3-dihydroxy-isovalerate. The polypeptide is Ketol-acid reductoisomerase (NADP(+)) (Leuconostoc mesenteroides subsp. cremoris).